We begin with the raw amino-acid sequence, 72 residues long: Translational regulator CsrA (72 aa).

The protein belongs to the CsrA/RsmA family. In terms of assembly, homodimer; the beta-strands of each monomer intercalate to form a hydrophobic core, while the alpha-helices form wings that extend away from the core.

It localises to the cytoplasm. Functionally, a translational regulator that binds mRNA to regulate translation initiation and/or mRNA stability. Usually binds in the 5'-UTR at or near the Shine-Dalgarno sequence preventing ribosome-binding, thus repressing translation. Its main target seems to be the major flagellin gene, while its function is anatagonized by FliW. This Ruminiclostridium cellulolyticum (strain ATCC 35319 / DSM 5812 / JCM 6584 / H10) (Clostridium cellulolyticum) protein is Translational regulator CsrA.